A 692-amino-acid polypeptide reads, in one-letter code: Elongation factor G (692 aa).

The region spanning 8-282 (ENTRNIGIMA…AVIDYLPSPL (275 aa)) is the tr-type G domain. GTP contacts are provided by residues 17 to 24 (AHIDAGKT), 81 to 85 (DTPGH), and 135 to 138 (NKMD).

Belongs to the TRAFAC class translation factor GTPase superfamily. Classic translation factor GTPase family. EF-G/EF-2 subfamily.

The protein localises to the cytoplasm. Its function is as follows. Catalyzes the GTP-dependent ribosomal translocation step during translation elongation. During this step, the ribosome changes from the pre-translocational (PRE) to the post-translocational (POST) state as the newly formed A-site-bound peptidyl-tRNA and P-site-bound deacylated tRNA move to the P and E sites, respectively. Catalyzes the coordinated movement of the two tRNA molecules, the mRNA and conformational changes in the ribosome. The polypeptide is Elongation factor G (Bacillus mycoides (strain KBAB4) (Bacillus weihenstephanensis)).